Reading from the N-terminus, the 152-residue chain is Small ribosomal subunit protein uS8m (152 aa).

It belongs to the universal ribosomal protein uS8 family.

It is found in the mitochondrion. The polypeptide is Small ribosomal subunit protein uS8m (mrps8) (Dictyostelium citrinum (Slime mold)).